Here is a 349-residue protein sequence, read N- to C-terminus: UDP-3-O-acylglucosamine N-acyltransferase (349 aa).

H248 functions as the Proton acceptor in the catalytic mechanism.

This sequence belongs to the transferase hexapeptide repeat family. LpxD subfamily. In terms of assembly, homotrimer.

The enzyme catalyses a UDP-3-O-[(3R)-3-hydroxyacyl]-alpha-D-glucosamine + a (3R)-hydroxyacyl-[ACP] = a UDP-2-N,3-O-bis[(3R)-3-hydroxyacyl]-alpha-D-glucosamine + holo-[ACP] + H(+). Its pathway is bacterial outer membrane biogenesis; LPS lipid A biosynthesis. Catalyzes the N-acylation of UDP-3-O-acylglucosamine using 3-hydroxyacyl-ACP as the acyl donor. Is involved in the biosynthesis of lipid A, a phosphorylated glycolipid that anchors the lipopolysaccharide to the outer membrane of the cell. The sequence is that of UDP-3-O-acylglucosamine N-acyltransferase from Colwellia psychrerythraea (strain 34H / ATCC BAA-681) (Vibrio psychroerythus).